The following is a 258-amino-acid chain: Imidazole glycerol phosphate synthase subunit HisF (258 aa).

Catalysis depends on residues aspartate 11 and aspartate 130.

Belongs to the HisA/HisF family. As to quaternary structure, heterodimer of HisH and HisF.

Its subcellular location is the cytoplasm. It catalyses the reaction 5-[(5-phospho-1-deoxy-D-ribulos-1-ylimino)methylamino]-1-(5-phospho-beta-D-ribosyl)imidazole-4-carboxamide + L-glutamine = D-erythro-1-(imidazol-4-yl)glycerol 3-phosphate + 5-amino-1-(5-phospho-beta-D-ribosyl)imidazole-4-carboxamide + L-glutamate + H(+). It functions in the pathway amino-acid biosynthesis; L-histidine biosynthesis; L-histidine from 5-phospho-alpha-D-ribose 1-diphosphate: step 5/9. In terms of biological role, IGPS catalyzes the conversion of PRFAR and glutamine to IGP, AICAR and glutamate. The HisF subunit catalyzes the cyclization activity that produces IGP and AICAR from PRFAR using the ammonia provided by the HisH subunit. This is Imidazole glycerol phosphate synthase subunit HisF from Bradyrhizobium sp. (strain BTAi1 / ATCC BAA-1182).